A 233-amino-acid chain; its full sequence is TATA-box-binding protein 1 (233 aa).

A run of 2 repeats spans residues 58–134 (LQNI…ARIV) and 148–225 (IQNI…YPVL).

It belongs to the TBP family. In terms of assembly, belongs to the TFIID complex together with the TBP-associated factors (TAFs). Binds DNA as monomer.

It localises to the nucleus. Its function is as follows. General transcription factor that functions at the core of the DNA-binding multiprotein factor TFIID. Binding of TFIID to the TATA box is the initial transcriptional step of the pre-initiation complex (PIC), playing a role in the activation of eukaryotic genes transcribed by RNA polymerase II. This is TATA-box-binding protein 1 (TBP1) from Triticum aestivum (Wheat).